The primary structure comprises 241 residues: Chalcone--flavanone isomerase C (241 aa).

3 residues coordinate substrate: T50, N115, and S192.

This sequence belongs to the chalcone isomerase family.

It catalyses the reaction a chalcone = a flavanone.. The protein operates within secondary metabolite biosynthesis; flavonoid biosynthesis. In terms of biological role, catalyzes the intramolecular cyclization of bicyclic chalcones into tricyclic (S)-flavanones. Responsible for the isomerization of 4,2',4',6'-tetrahydroxychalcone (also termed chalcone) into naringenin. This chain is Chalcone--flavanone isomerase C (CHI3), found in Petunia hybrida (Petunia).